A 197-amino-acid polypeptide reads, in one-letter code: Shikimate kinase (197 aa).

Residue 14 to 19 (GSGKST) participates in ATP binding. Serine 18 is a binding site for Mg(2+). 3 residues coordinate substrate: aspartate 36, arginine 60, and glycine 82. Arginine 120 contacts ATP. Arginine 147 serves as a coordination point for substrate.

Belongs to the shikimate kinase family. As to quaternary structure, monomer. It depends on Mg(2+) as a cofactor.

It is found in the cytoplasm. The catalysed reaction is shikimate + ATP = 3-phosphoshikimate + ADP + H(+). The protein operates within metabolic intermediate biosynthesis; chorismate biosynthesis; chorismate from D-erythrose 4-phosphate and phosphoenolpyruvate: step 5/7. Functionally, catalyzes the specific phosphorylation of the 3-hydroxyl group of shikimic acid using ATP as a cosubstrate. In Prosthecochloris aestuarii (strain DSM 271 / SK 413), this protein is Shikimate kinase.